A 396-amino-acid chain; its full sequence is Phosphopentomutase (396 aa).

Residues Asp14, Asp286, His291, Asp327, His328, and His339 each contribute to the Mn(2+) site.

Belongs to the phosphopentomutase family. The cofactor is Mn(2+).

Its subcellular location is the cytoplasm. It catalyses the reaction 2-deoxy-alpha-D-ribose 1-phosphate = 2-deoxy-D-ribose 5-phosphate. It carries out the reaction alpha-D-ribose 1-phosphate = D-ribose 5-phosphate. The protein operates within carbohydrate degradation; 2-deoxy-D-ribose 1-phosphate degradation; D-glyceraldehyde 3-phosphate and acetaldehyde from 2-deoxy-alpha-D-ribose 1-phosphate: step 1/2. Its function is as follows. Isomerase that catalyzes the conversion of deoxy-ribose 1-phosphate (dRib-1-P) and ribose 1-phosphate (Rib-1-P) to deoxy-ribose 5-phosphate (dRib-5-P) and ribose 5-phosphate (Rib-5-P), respectively. This Staphylococcus epidermidis (strain ATCC 35984 / DSM 28319 / BCRC 17069 / CCUG 31568 / BM 3577 / RP62A) protein is Phosphopentomutase.